Reading from the N-terminus, the 274-residue chain is Diaminopimelate epimerase (274 aa).

3 residues coordinate substrate: N13, Q45, and N63. Catalysis depends on C72, which acts as the Proton donor. Substrate-binding positions include 73–74 (GN), N158, N191, and 209–210 (ER). The Proton acceptor role is filled by C218. 219–220 (GT) is a substrate binding site.

Belongs to the diaminopimelate epimerase family. Homodimer.

The protein localises to the cytoplasm. It carries out the reaction (2S,6S)-2,6-diaminopimelate = meso-2,6-diaminopimelate. It functions in the pathway amino-acid biosynthesis; L-lysine biosynthesis via DAP pathway; DL-2,6-diaminopimelate from LL-2,6-diaminopimelate: step 1/1. Its function is as follows. Catalyzes the stereoinversion of LL-2,6-diaminopimelate (L,L-DAP) to meso-diaminopimelate (meso-DAP), a precursor of L-lysine and an essential component of the bacterial peptidoglycan. This chain is Diaminopimelate epimerase, found in Pelagibacter ubique (strain HTCC1062).